The chain runs to 439 residues: UDP-N-acetylmuramate--L-alanine ligase (439 aa).

113 to 119 contacts ATP; it reads GSHGKTS.

The protein belongs to the MurCDEF family.

The protein resides in the cytoplasm. It catalyses the reaction UDP-N-acetyl-alpha-D-muramate + L-alanine + ATP = UDP-N-acetyl-alpha-D-muramoyl-L-alanine + ADP + phosphate + H(+). Its pathway is cell wall biogenesis; peptidoglycan biosynthesis. Its function is as follows. Cell wall formation. This is UDP-N-acetylmuramate--L-alanine ligase from Lactobacillus delbrueckii subsp. bulgaricus (strain ATCC 11842 / DSM 20081 / BCRC 10696 / JCM 1002 / NBRC 13953 / NCIMB 11778 / NCTC 12712 / WDCM 00102 / Lb 14).